A 178-amino-acid chain; its full sequence is Large ribosomal subunit protein uL6 (178 aa).

This sequence belongs to the universal ribosomal protein uL6 family. In terms of assembly, part of the 50S ribosomal subunit.

This protein binds to the 23S rRNA, and is important in its secondary structure. It is located near the subunit interface in the base of the L7/L12 stalk, and near the tRNA binding site of the peptidyltransferase center. The protein is Large ribosomal subunit protein uL6 of Enterococcus faecalis (strain ATCC 700802 / V583).